The primary structure comprises 96 residues: Putative toxin Y4kP (96 aa).

It belongs to the RelE toxin family.

Its function is as follows. Toxic component of a type II toxin-antitoxin (TA) system. The sequence is that of Putative toxin Y4kP from Sinorhizobium fredii (strain NBRC 101917 / NGR234).